We begin with the raw amino-acid sequence, 176 residues long: Small ribosomal subunit protein uS5 (176 aa).

One can recognise an S5 DRBM domain in the interval 18–81 (FEEKMLFVNR…SIARKNMISV (64 aa)).

It belongs to the universal ribosomal protein uS5 family. As to quaternary structure, part of the 30S ribosomal subunit. Contacts proteins S4 and S8.

In terms of biological role, with S4 and S12 plays an important role in translational accuracy. Functionally, located at the back of the 30S subunit body where it stabilizes the conformation of the head with respect to the body. This is Small ribosomal subunit protein uS5 from Deinococcus deserti (strain DSM 17065 / CIP 109153 / LMG 22923 / VCD115).